Here is a 362-residue protein sequence, read N- to C-terminus: Spermidine/putrescine import ATP-binding protein PotA (362 aa).

One can recognise an ABC transporter domain in the interval 4–235; the sequence is IKLDHITKQY…PVNDFVARFI (232 aa). Position 37-44 (37-44) interacts with ATP; that stretch reads GPSGSGKT.

The protein belongs to the ABC transporter superfamily. Spermidine/putrescine importer (TC 3.A.1.11.1) family. In terms of assembly, the complex is composed of two ATP-binding proteins (PotA), two transmembrane proteins (PotB and PotC) and a solute-binding protein (PotD).

It localises to the cell membrane. The catalysed reaction is ATP + H2O + polyamine-[polyamine-binding protein]Side 1 = ADP + phosphate + polyamineSide 2 + [polyamine-binding protein]Side 1.. Part of the ABC transporter complex PotABCD involved in spermidine/putrescine import. Responsible for energy coupling to the transport system. The protein is Spermidine/putrescine import ATP-binding protein PotA of Lactobacillus delbrueckii subsp. bulgaricus (strain ATCC BAA-365 / Lb-18).